Reading from the N-terminus, the 480-residue chain is Glycogen synthase 1 (480 aa).

K15 contacts ADP-alpha-D-glucose.

This sequence belongs to the glycosyltransferase 1 family. Bacterial/plant glycogen synthase subfamily.

The enzyme catalyses [(1-&gt;4)-alpha-D-glucosyl](n) + ADP-alpha-D-glucose = [(1-&gt;4)-alpha-D-glucosyl](n+1) + ADP + H(+). It functions in the pathway glycan biosynthesis; glycogen biosynthesis. Functionally, synthesizes alpha-1,4-glucan chains using ADP-glucose. The protein is Glycogen synthase 1 (glgA1) of Rhizobium radiobacter (Agrobacterium tumefaciens).